A 355-amino-acid polypeptide reads, in one-letter code: Peptide chain release factor 1 (355 aa).

Q231 is modified (N5-methylglutamine). Residues 280–291 show a composition bias toward basic and acidic residues; the sequence is SERLAKESEARK. Residues 280-303 are disordered; that stretch reads SERLAKESEARKSQVGSGDRSERI.

It belongs to the prokaryotic/mitochondrial release factor family. Methylated by PrmC. Methylation increases the termination efficiency of RF1.

It localises to the cytoplasm. In terms of biological role, peptide chain release factor 1 directs the termination of translation in response to the peptide chain termination codons UAG and UAA. In Campylobacter jejuni (strain RM1221), this protein is Peptide chain release factor 1.